The sequence spans 322 residues: Beta-ketoacyl-[acyl-carrier-protein] synthase III (322 aa).

Residues Cys113 and His249 contribute to the active site. Residues 250-254 are ACP-binding; sequence QANLR. Asn279 is a catalytic residue.

This sequence belongs to the thiolase-like superfamily. FabH family. Homodimer.

Its subcellular location is the cytoplasm. The enzyme catalyses malonyl-[ACP] + acetyl-CoA + H(+) = 3-oxobutanoyl-[ACP] + CO2 + CoA. The protein operates within lipid metabolism; fatty acid biosynthesis. Functionally, catalyzes the condensation reaction of fatty acid synthesis by the addition to an acyl acceptor of two carbons from malonyl-ACP. Catalyzes the first condensation reaction which initiates fatty acid synthesis and may therefore play a role in governing the total rate of fatty acid production. Possesses both acetoacetyl-ACP synthase and acetyl transacylase activities. Its substrate specificity determines the biosynthesis of branched-chain and/or straight-chain of fatty acids. The sequence is that of Beta-ketoacyl-[acyl-carrier-protein] synthase III from Marinobacter nauticus (strain ATCC 700491 / DSM 11845 / VT8) (Marinobacter aquaeolei).